The chain runs to 473 residues: FAD-dependent oxidoreductase dpchF (473 aa).

The signal sequence occupies residues Met-1 to Ala-21. Asn-98, Asn-128, Asn-181, Asn-262, and Asn-330 each carry an N-linked (GlcNAc...) asparagine glycan.

Belongs to the beta-cyclopiazonate dehydrogenase family. FAD serves as cofactor.

The protein operates within secondary metabolite biosynthesis; terpenoid biosynthesis. Functionally, FAD-dependent oxidoreductase; part of the gene cluster that mediates the biosynthesis of the diterpenoid pyrones higginsianins A and B. The first step of the pathway is the synthesis of the alpha-pyrone moiety by the polyketide synthase dpchA via condensation of one acetyl-CoA starter unit with 3 malonyl-CoA units and 2 methylations. The alpha-pyrone is then combined with geranylgeranyl pyrophosphate (GGPP) formed by the GGPP synthase dpchD through the action of the prenyltransferase dpchC to yield a linear alpha-pyrone diterpenoid. Subsequent steps in the diterpenoid pyrone biosynthetic pathway involve the decalin core formation, which is initiated by the epoxidation of the C10-C11 olefin by the FAD-dependent oxidoreductase dpchE, and is followed by a cyclization cascade catalyzed by the terpene cyclase dpchB. The short chain dehydrogenase/reductase dpchG then oxidizes the 8S hydroxy group to a ketone and the short chain dehydrogenase/reductase dpchH reduces the ketone to the 8R hydroxy group to yield higginsianin B. Finally, the FAD-dependent oxidoreductase dpchF converts higginsianin B into higginsianin A. The polypeptide is FAD-dependent oxidoreductase dpchF (Colletotrichum higginsianum (strain IMI 349063) (Crucifer anthracnose fungus)).